The following is a 249-amino-acid chain: Type III pantothenate kinase (249 aa).

6–13 (DCGNSFIK) is an ATP binding site. Substrate contacts are provided by residues Y93 and 100-103 (GLDR). Catalysis depends on D102, which acts as the Proton acceptor. D122 contacts K(+). T125 contacts ATP. T181 is a substrate binding site.

Belongs to the type III pantothenate kinase family. Homodimer. The cofactor is NH4(+). Requires K(+) as cofactor.

It is found in the cytoplasm. The catalysed reaction is (R)-pantothenate + ATP = (R)-4'-phosphopantothenate + ADP + H(+). It functions in the pathway cofactor biosynthesis; coenzyme A biosynthesis; CoA from (R)-pantothenate: step 1/5. Functionally, catalyzes the phosphorylation of pantothenate (Pan), the first step in CoA biosynthesis. This is Type III pantothenate kinase from Pseudomonas savastanoi pv. phaseolicola (strain 1448A / Race 6) (Pseudomonas syringae pv. phaseolicola (strain 1448A / Race 6)).